The following is a 566-amino-acid chain: Arginine--tRNA ligase (566 aa).

The 'HIGH' region signature appears at 124 to 134 (ANPNGPLHIGH).

It belongs to the class-I aminoacyl-tRNA synthetase family.

The protein localises to the cytoplasm. The enzyme catalyses tRNA(Arg) + L-arginine + ATP = L-arginyl-tRNA(Arg) + AMP + diphosphate. The polypeptide is Arginine--tRNA ligase (argS) (Methanocaldococcus jannaschii (strain ATCC 43067 / DSM 2661 / JAL-1 / JCM 10045 / NBRC 100440) (Methanococcus jannaschii)).